A 435-amino-acid polypeptide reads, in one-letter code: Serine carboxypeptidase-like 14 (435 aa).

A signal peptide spans 1 to 23 (MGSWIPKLLLLQLVLLLTKHADS). Disulfide bonds link Cys82-Cys325, Cys246-Cys260, and Cys284-Cys291. A glycan (N-linked (GlcNAc...) asparagine) is linked at Asn103. Ser178 is a catalytic residue. Asn344 is a glycosylation site (N-linked (GlcNAc...) asparagine). The active site involves Asp360. Residue Asn376 is glycosylated (N-linked (GlcNAc...) asparagine). His413 is an active-site residue.

It belongs to the peptidase S10 family. In terms of tissue distribution, expressed in senescent leaves.

Its subcellular location is the secreted. Probable carboxypeptidase. The polypeptide is Serine carboxypeptidase-like 14 (SCPL14) (Arabidopsis thaliana (Mouse-ear cress)).